We begin with the raw amino-acid sequence, 177 residues long: VQ motif-containing protein 11 (177 aa).

Positions F25 to G34 match the VQ motif. A phosphoserine mark is found at S43, S99, S115, S142, and S145. A compositionally biased stretch (basic and acidic residues) spans S115 to A133. Residues S115–S177 are disordered. Residues E148–L159 are compositionally biased toward low complexity. S161 is subject to Phosphoserine. The span at R168–S177 shows a compositional bias: basic and acidic residues.

Post-translationally, phosphorylated on serine residues by MPK6.

Its subcellular location is the nucleus. Its function is as follows. May modulate WRKY transcription factor activities. This chain is VQ motif-containing protein 11, found in Arabidopsis thaliana (Mouse-ear cress).